Here is a 599-residue protein sequence, read N- to C-terminus: Beta-glucuronidase (599 aa).

D-glucuronate is bound by residues Asp-160 and Asn-407. Glu-408 (proton donor) is an active-site residue. D-glucuronate-binding residues include Asn-462, Tyr-468, Glu-501, Trp-546, and Lys-565. Residue Glu-501 is the Nucleophile of the active site. The N-K motif signature appears at 563–565 (NHK).

The protein belongs to the glycosyl hydrolase 2 family.

It carries out the reaction a beta-D-glucuronoside + H2O = D-glucuronate + an alcohol. Inhibited by a set of synthetic compounds like thio-urea derivatives and analogs. Inhibitors of gut microbial beta-glucuronidases are expected to block the reactivation of glucuronidated cancer drugs, and to alleviate drug-induced GI toxicity. Its function is as follows. Displays beta-glucuronidase activity with the artificial substrate p-nitrophenyl-beta-D-glucuronide (PNPG). Is likely capable of scavenging glucuronate from a range of chemically distinct xenobiotic and endobiotic glucuronides present in the gastrointestinal (GI) tract, to be able to utilize these diverse sources of carbon. As part of the GI microbiome, this enzyme would be able to reactivate glucuronide drug conjugates, such reactivated compounds can significantly damage the GI tract. In Streptococcus agalactiae serotype V (strain ATCC BAA-611 / 2603 V/R), this protein is Beta-glucuronidase.